A 137-amino-acid polypeptide reads, in one-letter code: Peptide methionine sulfoxide reductase MsrB (137 aa).

A MsrB domain is found at 7–129 (AEELKKNLSE…NSASLRFTDG (123 aa)). Zn(2+)-binding residues include Cys46, Cys49, Cys95, and Cys98. Catalysis depends on Cys118, which acts as the Nucleophile.

Belongs to the MsrB Met sulfoxide reductase family. Zn(2+) is required as a cofactor.

The catalysed reaction is L-methionyl-[protein] + [thioredoxin]-disulfide + H2O = L-methionyl-(R)-S-oxide-[protein] + [thioredoxin]-dithiol. The sequence is that of Peptide methionine sulfoxide reductase MsrB from Escherichia coli O45:K1 (strain S88 / ExPEC).